Here is a 166-residue protein sequence, read N- to C-terminus: Small ribosomal subunit protein uS5 (166 aa).

Residues 11–74 enclose the S5 DRBM domain; sequence LQEKLIAVNR…EKARRNMINV (64 aa).

This sequence belongs to the universal ribosomal protein uS5 family. Part of the 30S ribosomal subunit. Contacts proteins S4 and S8.

Its function is as follows. With S4 and S12 plays an important role in translational accuracy. In terms of biological role, located at the back of the 30S subunit body where it stabilizes the conformation of the head with respect to the body. The chain is Small ribosomal subunit protein uS5 from Cronobacter sakazakii (strain ATCC BAA-894) (Enterobacter sakazakii).